We begin with the raw amino-acid sequence, 868 residues long: DNA mismatch repair protein MutS (868 aa).

ATP is bound at residue glycine 623–serine 630.

Belongs to the DNA mismatch repair MutS family.

This protein is involved in the repair of mismatches in DNA. It is possible that it carries out the mismatch recognition step. This protein has a weak ATPase activity. The chain is DNA mismatch repair protein MutS from Magnetococcus marinus (strain ATCC BAA-1437 / JCM 17883 / MC-1).